The following is a 419-amino-acid chain: Indole prenyltransferase tdiB (419 aa).

L-tryptophan is bound at residue 58–59 (PS). Substrate-binding residues include Arg-81, Lys-165, Tyr-167, Arg-236, Lys-238, Tyr-240, Tyr-330, and Tyr-394.

It belongs to the tryptophan dimethylallyltransferase family.

It catalyses the reaction didemethylasterriquinone D + dimethylallyl diphosphate = asterriquinone C1 + diphosphate. It participates in secondary metabolite biosynthesis. Functionally, indole prenyltransferase; part of the gene cluster that mediates the biosynthesis of terrequinone A, an antitumor agent. The first step in the biosynthetic pathway for terrequinone A is formation of indole pyruvic acid (IPA) from L-tryptophan by the aminotransferase tdiD. The nonribosomal peptide synthase tdiA then immediately converts unstable IPA to didemethylasterriquinone D (DDAQ D), via condensation of 2 IPA molecules. The symmetric connectivity of the 2 IPA molecules is thought to arise by head-to-tail dual Claisen condensations facilitated by the TE domain. TdiB then catalyzes reverse prenylation by transferring dimethylallyl diphosphate to carbon atom 2' of DDAQ D, to yield asterriquinone C-1. Finally, tdiC and tdiE enzymes robustly convert asterriquinone C-1 to terrequinone A via a transformation involving regular prenylation at carbon atom 5, which requires elimination of the hydroxy group on C-5. This Emericella nidulans (strain FGSC A4 / ATCC 38163 / CBS 112.46 / NRRL 194 / M139) (Aspergillus nidulans) protein is Indole prenyltransferase tdiB.